Here is a 227-residue protein sequence, read N- to C-terminus: Enolase-phosphatase E1 (227 aa).

Belongs to the HAD-like hydrolase superfamily. MasA/MtnC family. Monomer. Mg(2+) serves as cofactor.

The catalysed reaction is 5-methylsulfanyl-2,3-dioxopentyl phosphate + H2O = 1,2-dihydroxy-5-(methylsulfanyl)pent-1-en-3-one + phosphate. It functions in the pathway amino-acid biosynthesis; L-methionine biosynthesis via salvage pathway; L-methionine from S-methyl-5-thio-alpha-D-ribose 1-phosphate: step 3/6. It participates in amino-acid biosynthesis; L-methionine biosynthesis via salvage pathway; L-methionine from S-methyl-5-thio-alpha-D-ribose 1-phosphate: step 4/6. Its function is as follows. Bifunctional enzyme that catalyzes the enolization of 2,3-diketo-5-methylthiopentyl-1-phosphate (DK-MTP-1-P) into the intermediate 2-hydroxy-3-keto-5-methylthiopentenyl-1-phosphate (HK-MTPenyl-1-P), which is then dephosphorylated to form the acireductone 1,2-dihydroxy-3-keto-5-methylthiopentene (DHK-MTPene). This is Enolase-phosphatase E1 from Pseudomonas syringae pv. syringae (strain B728a).